The primary structure comprises 383 residues: Activator of 90 kDa heat shock protein ATPase homolog (383 aa).

Disordered regions lie at residues 97–126 (KKVLPPPPTTKSKGAADDIDEEDDDGKPAE) and 209–228 (EQSQQQQTANTTTNTTTTTN).

The protein belongs to the AHA1 family. As to quaternary structure, interacts with hspD/HSP90.

Its subcellular location is the cytoplasm. Functionally, co-chaperone that stimulates hspD/HSP90 ATPase activity. The chain is Activator of 90 kDa heat shock protein ATPase homolog (ahsa) from Dictyostelium discoideum (Social amoeba).